Consider the following 51-residue polypeptide: MARYRCCRSKSRSRCRRRRRRCRRRRRRCCRRRRRRCCRRRRSYTFRCKRY.

2 disulfides stabilise this stretch: C7-C15 and C38-C48.

It belongs to the protamine P1 family. Cross-linked by interchain disulfide bonds around the DNA-helix. In terms of processing, phosphorylated by SRPK1. Testis.

It localises to the nucleus. It is found in the chromosome. Protamines substitute for histones in the chromatin of sperm during the haploid phase of spermatogenesis. They compact sperm DNA into a highly condensed, stable and inactive complex. The polypeptide is Sperm protamine P1 (Prm1) (Rattus norvegicus (Rat)).